Consider the following 339-residue polypeptide: GTPase Obg (339 aa).

The Obg domain occupies 1-158 (MKFLDQVDLR…RDLTFELKLM (158 aa)). Disordered regions lie at residues 66–86 (FAEDGEPGGRREQTGASGEDK) and 125–148 (GNAFFKSSTNQAPRESQPGEPGEE). The span at 72–86 (PGGRREQTGASGEDK) shows a compositional bias: basic and acidic residues. Polar residues predominate over residues 129–138 (FKSSTNQAPR). The OBG-type G domain occupies 159-329 (ADVGLVGFPN…LKYTLFDTVH (171 aa)). GTP is bound by residues 165–172 (GFPNAGKS), 190–194 (FTTLT), 212–215 (DIPG), 279–282 (SKID), and 310–312 (SAV). The Mg(2+) site is built by Ser172 and Thr192.

This sequence belongs to the TRAFAC class OBG-HflX-like GTPase superfamily. OBG GTPase family. Monomer. Mg(2+) serves as cofactor.

Its subcellular location is the cytoplasm. Functionally, an essential GTPase which binds GTP, GDP and possibly (p)ppGpp with moderate affinity, with high nucleotide exchange rates and a fairly low GTP hydrolysis rate. Plays a role in control of the cell cycle, stress response, ribosome biogenesis and in those bacteria that undergo differentiation, in morphogenesis control. This chain is GTPase Obg, found in Salinibacter ruber (strain DSM 13855 / M31).